A 286-amino-acid polypeptide reads, in one-letter code: Nucleotide-binding protein Sfum_2066 (286 aa).

8–15 contributes to the ATP binding site; that stretch reads GLSGSGKS. Residue 59-62 participates in GTP binding; sequence DIRE.

This sequence belongs to the RapZ-like family.

Displays ATPase and GTPase activities. This Syntrophobacter fumaroxidans (strain DSM 10017 / MPOB) protein is Nucleotide-binding protein Sfum_2066.